The primary structure comprises 338 residues: Tetraacyldisaccharide 4'-kinase (338 aa).

53-60 (VAGGAGKT) is an ATP binding site.

It belongs to the LpxK family.

The enzyme catalyses a lipid A disaccharide + ATP = a lipid IVA + ADP + H(+). The protein operates within glycolipid biosynthesis; lipid IV(A) biosynthesis; lipid IV(A) from (3R)-3-hydroxytetradecanoyl-[acyl-carrier-protein] and UDP-N-acetyl-alpha-D-glucosamine: step 6/6. Functionally, transfers the gamma-phosphate of ATP to the 4'-position of a tetraacyldisaccharide 1-phosphate intermediate (termed DS-1-P) to form tetraacyldisaccharide 1,4'-bis-phosphate (lipid IVA). The chain is Tetraacyldisaccharide 4'-kinase from Polaromonas sp. (strain JS666 / ATCC BAA-500).